The primary structure comprises 288 residues: tRNA pseudouridine synthase B (288 aa).

The active-site Nucleophile is aspartate 38.

Belongs to the pseudouridine synthase TruB family. Type 1 subfamily.

The catalysed reaction is uridine(55) in tRNA = pseudouridine(55) in tRNA. In terms of biological role, responsible for synthesis of pseudouridine from uracil-55 in the psi GC loop of transfer RNAs. This chain is tRNA pseudouridine synthase B, found in Carboxydothermus hydrogenoformans (strain ATCC BAA-161 / DSM 6008 / Z-2901).